Consider the following 417-residue polypeptide: Equilibrative nucleotide transporter 2 (417 aa).

11 helical membrane-spanning segments follow: residues 20–40 (AVCW…LTIV), 52–72 (PSRI…SVLV), 85–105 (LFGY…NLAT), 109–129 (GGIG…LADA), 144–164 (PEFL…TSGL), 185–205 (LFFA…AYVF), 265–285 (LAVT…GFLS), 292–312 (SLGD…DLVG), 328–348 (CLLI…ITGI), 354–374 (WMIF…VCVI), and 393–413 (LVLY…LWLV).

This sequence belongs to the SLC29A/ENT transporter (TC 2.A.57) family. Expressed in leaves and flowers.

The protein localises to the cell membrane. Its function is as follows. May be involved in nucleoside transport. In Arabidopsis thaliana (Mouse-ear cress), this protein is Equilibrative nucleotide transporter 2 (ENT2).